A 393-amino-acid polypeptide reads, in one-letter code: Upstream-binding factor 1-like protein 1 (393 aa).

2 DNA-binding regions (HMG box) span residues 100 to 168 (PKRP…ARFR) and 222 to 288 (QKPP…DLWL). The tract at residues 308-393 (KNMAMTGGPD…SSGEEIEVDV (86 aa)) is disordered. Residues 365 to 377 (EENRKKDREKEES) are compositionally biased toward basic and acidic residues.

It is found in the cytoplasm. The protein resides in the nucleus. Essential for proliferation of the inner cell mass and trophectodermal cells in peri-implantation development. This is Upstream-binding factor 1-like protein 1 from Homo sapiens (Human).